Reading from the N-terminus, the 144-residue chain is Large ribosomal subunit protein uL15 (144 aa).

Residues 1 to 56 (MELNNLKPAEGAKHAKRRVGRGIGSGLGKTAGRGHKGQKSRSGGFHKVGFEGGQMP) form a disordered region. Over residues 21–31 (RGIGSGLGKTA) the composition is skewed to gly residues.

The protein belongs to the universal ribosomal protein uL15 family. In terms of assembly, part of the 50S ribosomal subunit.

Its function is as follows. Binds to the 23S rRNA. The polypeptide is Large ribosomal subunit protein uL15 (Burkholderia mallei (strain NCTC 10247)).